A 753-amino-acid polypeptide reads, in one-letter code: Ion-translocating oxidoreductase complex subunit C (753 aa).

2 4Fe-4S ferredoxin-type domains span residues 367–397 (EMGEPQEEKGCIRCSACADACPADLLPQQLY) and 407–436 (KATAHNLADCIECGACAWVCPSNIPLVQYF). [4Fe-4S] cluster is bound by residues cysteine 377, cysteine 380, cysteine 383, cysteine 387, cysteine 416, cysteine 419, cysteine 422, and cysteine 426. Disordered regions lie at residues 517 to 561 (AKPD…RKAA), 606 to 625 (RKAEQQVAPVEAPVAEPVDP), 640 to 659 (RKAEQQVAPVEAPVAEPVDP), and 705 to 735 (AKARKAEQQAAQPDLASAAANDDPRKAAVAA). Basic and acidic residues predominate over residues 526-537 (AAREARKAEARA). Low complexity-rich tracts occupy residues 610-622 (QQVAPVEAPVAEP), 644-656 (QQVAPVEAPVAEP), and 712-735 (QQAAQPDLASAAANDDPRKAAVAA).

Belongs to the 4Fe4S bacterial-type ferredoxin family. RnfC subfamily. As to quaternary structure, the complex is composed of six subunits: RnfA, RnfB, RnfC, RnfD, RnfE and RnfG. It depends on [4Fe-4S] cluster as a cofactor.

The protein localises to the cell inner membrane. Part of a membrane-bound complex that couples electron transfer with translocation of ions across the membrane. The polypeptide is Ion-translocating oxidoreductase complex subunit C (Klebsiella pneumoniae (strain 342)).